We begin with the raw amino-acid sequence, 256 residues long: SPX domain-containing protein 1 (256 aa).

The region spanning M1 to Q155 is the SPX domain. The Bipartite nuclear localization signal motif lies at K30–R46.

As to quaternary structure, interacts with PHR1 in a highly Pi-dependent manner.

It is found in the nucleus. In terms of biological role, plays a positive role in plant adaptation to phosphate starvation. Inhibits PHR1 DNA-binding activity in a Pi-dependent manner. This is SPX domain-containing protein 1 from Arabidopsis thaliana (Mouse-ear cress).